Consider the following 478-residue polypeptide: DKDTYKVSGGLHGVGVSCVNALSSLLVATVHREGKVFQQKYSTGNPQGAVEVVGQSDRTGTTIYFEPDATIFATTEYKYETVSKRLRELSYLNKGIRLTLTDLRETDEQGRHLYEEFFSEGGLKEFVEHLDSTRQPLLPAPIHVEKTDGDIPVEVALIYNNSYSENVFSYVNNINTHEGGTHVSGFRRALTRTLKSYADKSGMLEKAKVEITGDDFREGLTAVISIKVAEPQFEGQTKTKLGNSDAIGAVDNAVSEILGYYLEENPREAKLIIQKVILAAQARQAARKAREMVQRKNVMGGTSLPGKLADCSDTNPERCELYLVEGDSAGGSAKQGRDRSFQAILPLRGKILNVEKAQEYKIYDNEEIKNMITAMGVTFGTEEDSKALNLTKLRYHKIIIMTDADVDGSHIRTLILTFFFRYMRELIEQGYLYVALPPLYIVKKGKEERYAWSDAERDAIIREIAPEGKEDSVGIQRY.

The region spanning 319–438 (CELYLVEGDS…QGYLYVALPP (120 aa)) is the Toprim domain. Mg(2+)-binding residues include Glu325, Asp403, and Asp405.

Belongs to the type II topoisomerase GyrB family. As to quaternary structure, heterotetramer, composed of two GyrA and two GyrB chains. In the heterotetramer, GyrA contains the active site tyrosine that forms a transient covalent intermediate with DNA, while GyrB binds cofactors and catalyzes ATP hydrolysis. The cofactor is Mg(2+). Requires Mn(2+) as cofactor. It depends on Ca(2+) as a cofactor.

It is found in the cytoplasm. It carries out the reaction ATP-dependent breakage, passage and rejoining of double-stranded DNA.. A type II topoisomerase that negatively supercoils closed circular double-stranded (ds) DNA in an ATP-dependent manner to modulate DNA topology and maintain chromosomes in an underwound state. Negative supercoiling favors strand separation, and DNA replication, transcription, recombination and repair, all of which involve strand separation. Also able to catalyze the interconversion of other topological isomers of dsDNA rings, including catenanes and knotted rings. Type II topoisomerases break and join 2 DNA strands simultaneously in an ATP-dependent manner. This Eisenibacter elegans (Flexibacter elegans) protein is DNA gyrase subunit B (gyrB).